Here is a 273-residue protein sequence, read N- to C-terminus: Ribosomal RNA small subunit methyltransferase A (273 aa).

Positions 18, 20, 45, 66, 91, and 113 each coordinate S-adenosyl-L-methionine.

The protein belongs to the class I-like SAM-binding methyltransferase superfamily. rRNA adenine N(6)-methyltransferase family. RsmA subfamily.

It is found in the cytoplasm. It carries out the reaction adenosine(1518)/adenosine(1519) in 16S rRNA + 4 S-adenosyl-L-methionine = N(6)-dimethyladenosine(1518)/N(6)-dimethyladenosine(1519) in 16S rRNA + 4 S-adenosyl-L-homocysteine + 4 H(+). Functionally, specifically dimethylates two adjacent adenosines (A1518 and A1519) in the loop of a conserved hairpin near the 3'-end of 16S rRNA in the 30S particle. May play a critical role in biogenesis of 30S subunits. In Escherichia coli O139:H28 (strain E24377A / ETEC), this protein is Ribosomal RNA small subunit methyltransferase A.